Consider the following 482-residue polypeptide: ATP synthase subunit beta (482 aa).

Residue 168-175 participates in ATP binding; sequence GGAGVGKT.

The protein belongs to the ATPase alpha/beta chains family. F-type ATPases have 2 components, CF(1) - the catalytic core - and CF(0) - the membrane proton channel. CF(1) has five subunits: alpha(3), beta(3), gamma(1), delta(1), epsilon(1). CF(0) has three main subunits: a(1), b(2) and c(9-12). The alpha and beta chains form an alternating ring which encloses part of the gamma chain. CF(1) is attached to CF(0) by a central stalk formed by the gamma and epsilon chains, while a peripheral stalk is formed by the delta and b chains.

Its subcellular location is the cell membrane. The enzyme catalyses ATP + H2O + 4 H(+)(in) = ADP + phosphate + 5 H(+)(out). Its function is as follows. Produces ATP from ADP in the presence of a proton gradient across the membrane. The catalytic sites are hosted primarily by the beta subunits. This is ATP synthase subunit beta from Nocardia farcinica (strain IFM 10152).